We begin with the raw amino-acid sequence, 297 residues long: Bifunctional protein FolD (297 aa).

NADP(+)-binding positions include 168–170 (GRG), Thr-195, and Val-236.

This sequence belongs to the tetrahydrofolate dehydrogenase/cyclohydrolase family. As to quaternary structure, homodimer.

It catalyses the reaction (6R)-5,10-methylene-5,6,7,8-tetrahydrofolate + NADP(+) = (6R)-5,10-methenyltetrahydrofolate + NADPH. The enzyme catalyses (6R)-5,10-methenyltetrahydrofolate + H2O = (6R)-10-formyltetrahydrofolate + H(+). It participates in one-carbon metabolism; tetrahydrofolate interconversion. Catalyzes the oxidation of 5,10-methylenetetrahydrofolate to 5,10-methenyltetrahydrofolate and then the hydrolysis of 5,10-methenyltetrahydrofolate to 10-formyltetrahydrofolate. The polypeptide is Bifunctional protein FolD (Bifidobacterium animalis subsp. lactis (strain AD011)).